Reading from the N-terminus, the 457-residue chain is MDSFKVVLEGPAPWGFRLQGGKDFNVPLSISRLTPGGKAAQAGVAVGDWVLNIDGENAGSLTHIEAQNKIRACGERLSLGLSRAQPVQSKPQKALTPPADPPRYTFAPSASLNKTARPFGAPPPTDSTLRQNGQLLRQPVPDASKQRLMEDTEDWRPRPGTGQSRSFRILAHLTGTEFMQDPDEEFMKKSSQVPRTEAPAPASTIPQESWPGPTTPSPTSRPPWAVDPAFAERYAPDKTSTVLTRHSQPATPTPLQNRTSIVQAAAGGGTGGGSNNGKTPVCHQCHKIIRGRYLVALGHAYHPEEFVCSQCGKVLEEGGFFEEKGAIFCPSCYDVRYAPNCAKCKKKITGEIMHALKMTWHVHCFTCAACKTPIRNRAFYMEEGAPYCERDYEKMFGTKCRGCDFKIDAGDRFLEALGFSWHDTCFVCAICQINLEGKTFYSKKDKPLCKSHAFSHV.

The 85-residue stretch at 1-85 (MDSFKVVLEG…RLSLGLSRAQ (85 aa)) folds into the PDZ domain. Serine 78 is subject to Phosphoserine. Disordered regions lie at residues 82-166 (SRAQ…QSRS) and 186-226 (FMKK…PWAV). Threonine 96 is modified (phosphothreonine). Arginine 103 bears the Asymmetric dimethylarginine mark. At serine 111 the chain carries Phosphoserine. Positions 126–135 (DSTLRQNGQL) are enriched in polar residues. The span at 144–157 (SKQRLMEDTEDWRP) shows a compositional bias: basic and acidic residues. Serine 247 is modified (phosphoserine). LIM zinc-binding domains lie at 280 to 338 (PVCH…VRYA), 339 to 398 (PNCA…MFGT), and 399 to 457 (KCRG…FSHV).

In terms of assembly, specifically binds via its LIM zinc-binding 3 domain (LIM 3) domain to endocytic codes of INSR, but not with those of IGF1R, LDLR, TFRC, or EGFR. Interacts with various PKC isoforms through the LIM zinc-binding domains. Binds to RET in a phosphorylation-independent manner via its LIM zinc-binding domain 2 (LIM 2). Probably part of a complex with SHC and the RET dimer. Interacts with TPM2, TBX4 and TBX5.

Its subcellular location is the cytoplasm. The protein localises to the cytoskeleton. Its function is as follows. May function as a scaffold on which the coordinated assembly of proteins can occur. May play a role as an adapter that, via its PDZ domain, localizes LIM-binding proteins to actin filaments of both skeletal muscle and nonmuscle tissues. Involved in both of the two fundamental mechanisms of bone formation, direct bone formation (e.g. embryonic flat bones mandible and cranium), and endochondral bone formation (e.g. embryonic long bone development). Plays a role during fracture repair. Involved in BMP6 signaling pathway. This Mus musculus (Mouse) protein is PDZ and LIM domain protein 7 (Pdlim7).